The chain runs to 487 residues: WD repeat, SAM and U-box domain-containing protein 1 (487 aa).

WD repeat units follow at residues 10–47 (SHRD…ELPF), 52–93 (GHGY…AVLE), 95–134 (PGRS…LRRT), 137–176 (VNDT…LHAE), 179–227 (AHDL…SAGI), 237–276 (GQSA…LLYT), and 279–318 (QHDR…SAQG). In terms of domain architecture, SAM spans 347–411 (WSEEEVLAWL…MKKIEELKMV (65 aa)). The U-box domain maps to 416–487 (GTPDEFLCPI…MAIFRWSTSQ (72 aa)).

The protein is WD repeat, SAM and U-box domain-containing protein 1 (wdsub1) of Danio rerio (Zebrafish).